A 459-amino-acid polypeptide reads, in one-letter code: MHDRLIDENPTCGFVRLGLDVRSRVIVLGLGATGLSTVRFLRCHGFECAVMDSRLAPPGLQDLREAFPDVPLFLGDFSRSALAAATHLVVSPGLSLDLAEIRESHRCGVRVFGDLDLFACCVRAPVVAITGANGKSTVTTLVGLMAKAAGVNAAVGGNLGTPMLDLLDAAAELYVLELSSFQLERSELFEADVATVLNISPDHMDRYPDLASYAEAKRRVFRGEGLMVLNQDDPLVAAMYRPGRRAVRFGLGSGDELDYSLARWEGRAWLLAKGVPLLPADEVRIKGRHNLANALAAVAIADACGFDRQAMVGVLRTFPGLDHRMQWVADIGGVAYVNDSKATNVGACIAALSGLEGKVVLIAGGDGKGADFSSLVPVAAEKLRAAVLMGRDGPLIDEVLKGVVPTIRVKTMFEAVRAARGVAQSGDTVLLAPACASLDQYEDYQERGRDFAATVRSLA.

Residue 131 to 137 (GANGKST) coordinates ATP.

It belongs to the MurCDEF family.

It localises to the cytoplasm. The catalysed reaction is UDP-N-acetyl-alpha-D-muramoyl-L-alanine + D-glutamate + ATP = UDP-N-acetyl-alpha-D-muramoyl-L-alanyl-D-glutamate + ADP + phosphate + H(+). It functions in the pathway cell wall biogenesis; peptidoglycan biosynthesis. In terms of biological role, cell wall formation. Catalyzes the addition of glutamate to the nucleotide precursor UDP-N-acetylmuramoyl-L-alanine (UMA). In Methylococcus capsulatus (strain ATCC 33009 / NCIMB 11132 / Bath), this protein is UDP-N-acetylmuramoylalanine--D-glutamate ligase.